A 673-amino-acid polypeptide reads, in one-letter code: Bifunctional polymyxin resistance protein ArnA (673 aa).

Residues 1–311 (MKAIVFAYHD…EMGMVPQARL (311 aa)) form a formyltransferase ArnAFT region. H104 functions as the Proton donor; for formyltransferase activity in the catalytic mechanism. (6R)-10-formyltetrahydrofolate-binding positions include R114 and 136–140 (VSRAD). The interval 321–673 (RRTRVLILGV…HTADATDTQG (353 aa)) is dehydrogenase ArnADH. NAD(+) is bound by residues D354 and 375 to 376 (DI). Residues A400, Y405, and 439 to 440 (TS) contribute to the UDP-alpha-D-glucuronate site. Catalysis depends on E441, which acts as the Proton acceptor; for decarboxylase activity. UDP-alpha-D-glucuronate-binding positions include R467, N499, 533 to 542 (KLVDGGAQKR), and Y620. Residue R626 is the Proton donor; for decarboxylase activity of the active site.

This sequence in the N-terminal section; belongs to the Fmt family. UDP-L-Ara4N formyltransferase subfamily. In the C-terminal section; belongs to the NAD(P)-dependent epimerase/dehydratase family. UDP-glucuronic acid decarboxylase subfamily. Homohexamer, formed by a dimer of trimers.

It catalyses the reaction UDP-alpha-D-glucuronate + NAD(+) = UDP-beta-L-threo-pentopyranos-4-ulose + CO2 + NADH. The enzyme catalyses UDP-4-amino-4-deoxy-beta-L-arabinose + (6R)-10-formyltetrahydrofolate = UDP-4-deoxy-4-formamido-beta-L-arabinose + (6S)-5,6,7,8-tetrahydrofolate + H(+). It functions in the pathway nucleotide-sugar biosynthesis; UDP-4-deoxy-4-formamido-beta-L-arabinose biosynthesis; UDP-4-deoxy-4-formamido-beta-L-arabinose from UDP-alpha-D-glucuronate: step 1/3. It participates in nucleotide-sugar biosynthesis; UDP-4-deoxy-4-formamido-beta-L-arabinose biosynthesis; UDP-4-deoxy-4-formamido-beta-L-arabinose from UDP-alpha-D-glucuronate: step 3/3. The protein operates within bacterial outer membrane biogenesis; lipopolysaccharide biosynthesis. Functionally, bifunctional enzyme that catalyzes the oxidative decarboxylation of UDP-glucuronic acid (UDP-GlcUA) to UDP-4-keto-arabinose (UDP-Ara4O) and the addition of a formyl group to UDP-4-amino-4-deoxy-L-arabinose (UDP-L-Ara4N) to form UDP-L-4-formamido-arabinose (UDP-L-Ara4FN). The modified arabinose is attached to lipid A and is required for resistance to polymyxin and cationic antimicrobial peptides. This Pectobacterium atrosepticum (strain SCRI 1043 / ATCC BAA-672) (Erwinia carotovora subsp. atroseptica) protein is Bifunctional polymyxin resistance protein ArnA.